The following is a 131-amino-acid chain: MKTLKVNIVTPDGPVYDADIEMVSVRAESGELGILPGHIPTVAPLKIAAVRLKKDGQTELVAVSGGIVEVRPDHVTILAQTAETSEQIDKERALAAKRRAEERLQKQTPDVDIIRAELALKRAINRLDVAR.

It belongs to the ATPase epsilon chain family. As to quaternary structure, F-type ATPases have 2 components, CF(1) - the catalytic core - and CF(0) - the membrane proton channel. CF(1) has five subunits: alpha(3), beta(3), gamma(1), delta(1), epsilon(1). CF(0) has three main subunits: a, b and c.

The protein resides in the cell membrane. Functionally, produces ATP from ADP in the presence of a proton gradient across the membrane. The chain is ATP synthase epsilon chain from Bacillus licheniformis (strain ATCC 14580 / DSM 13 / JCM 2505 / CCUG 7422 / NBRC 12200 / NCIMB 9375 / NCTC 10341 / NRRL NRS-1264 / Gibson 46).